Here is a 427-residue protein sequence, read N- to C-terminus: Glucose-1-phosphate adenylyltransferase (427 aa).

AMP contacts are provided by R40, H46, and R52. Residue Y114 coordinates alpha-D-glucose 1-phosphate. R130 serves as a coordination point for AMP. Alpha-D-glucose 1-phosphate contacts are provided by residues G179, 194-195, and S212; that span reads EK. Residue R386 coordinates AMP.

Belongs to the bacterial/plant glucose-1-phosphate adenylyltransferase family. Homotetramer.

It carries out the reaction alpha-D-glucose 1-phosphate + ATP + H(+) = ADP-alpha-D-glucose + diphosphate. Its pathway is glycan biosynthesis; glycogen biosynthesis. Allosterically activated by fructose-1,6-bisphosphate (F16BP) and inhibited by AMP. In terms of biological role, involved in the biosynthesis of ADP-glucose, a building block required for the elongation reactions to produce glycogen. Catalyzes the reaction between ATP and alpha-D-glucose 1-phosphate (G1P) to produce pyrophosphate and ADP-Glc. This Cronobacter sakazakii (strain ATCC BAA-894) (Enterobacter sakazakii) protein is Glucose-1-phosphate adenylyltransferase.